Consider the following 1427-residue polypeptide: DNA-directed RNA polymerase subunit beta' (1427 aa).

Residues cysteine 66, cysteine 68, cysteine 81, and cysteine 84 each coordinate Zn(2+). Positions 472, 474, and 476 each coordinate Mg(2+). 4 residues coordinate Zn(2+): cysteine 815, cysteine 889, cysteine 896, and cysteine 899.

The protein belongs to the RNA polymerase beta' chain family. As to quaternary structure, the RNAP catalytic core consists of 2 alpha, 1 beta, 1 beta' and 1 omega subunit. When a sigma factor is associated with the core the holoenzyme is formed, which can initiate transcription. Mg(2+) serves as cofactor. The cofactor is Zn(2+).

The enzyme catalyses RNA(n) + a ribonucleoside 5'-triphosphate = RNA(n+1) + diphosphate. In terms of biological role, DNA-dependent RNA polymerase catalyzes the transcription of DNA into RNA using the four ribonucleoside triphosphates as substrates. In Bacteroides thetaiotaomicron (strain ATCC 29148 / DSM 2079 / JCM 5827 / CCUG 10774 / NCTC 10582 / VPI-5482 / E50), this protein is DNA-directed RNA polymerase subunit beta'.